Here is a 110-residue protein sequence, read N- to C-terminus: IQ domain-containing protein J (110 aa).

Residues 47–67 form the IQ domain; that stretch reads ESKVKIIQRAWREYLQRQDPL. Residues 63–99 form a disordered region; that stretch reads RQDPLEKRSPSPPSVSSDKLSSSVSMNTFSDSSTPVS. The segment covering 76–87 has biased composition (low complexity); it reads SVSSDKLSSSVS. Residues 88-99 are compositionally biased toward polar residues; the sequence is MNTFSDSSTPVS.

The sequence is that of IQ domain-containing protein J from Mus musculus (Mouse).